The primary structure comprises 75 residues: Tautomerase PptA (75 aa).

P2 serves as the catalytic Proton acceptor; via imino nitrogen.

The protein belongs to the 4-oxalocrotonate tautomerase family. PptA subfamily. As to quaternary structure, homodimer.

It localises to the cytoplasm. This is Tautomerase PptA from Escherichia coli O127:H6 (strain E2348/69 / EPEC).